Here is a 203-residue protein sequence, read N- to C-terminus: Peptide deformylase (203 aa).

Fe cation is bound by residues Cys-130 and His-173. The active site involves Glu-174. His-177 is a Fe cation binding site.

Belongs to the polypeptide deformylase family. It depends on Fe(2+) as a cofactor.

It carries out the reaction N-terminal N-formyl-L-methionyl-[peptide] + H2O = N-terminal L-methionyl-[peptide] + formate. Functionally, removes the formyl group from the N-terminal Met of newly synthesized proteins. Requires at least a dipeptide for an efficient rate of reaction. N-terminal L-methionine is a prerequisite for activity but the enzyme has broad specificity at other positions. This is Peptide deformylase from Streptococcus pneumoniae serotype 2 (strain D39 / NCTC 7466).